The following is a 350-amino-acid chain: Chorismate synthase (350 aa).

Arginine 48 lines the NADP(+) pocket. Residues 125–127 (RSS), glycine 277, 292–296 (KPIPS), and arginine 318 each bind FMN.

The protein belongs to the chorismate synthase family. As to quaternary structure, homotetramer. The cofactor is FMNH2.

It catalyses the reaction 5-O-(1-carboxyvinyl)-3-phosphoshikimate = chorismate + phosphate. The protein operates within metabolic intermediate biosynthesis; chorismate biosynthesis; chorismate from D-erythrose 4-phosphate and phosphoenolpyruvate: step 7/7. In terms of biological role, catalyzes the anti-1,4-elimination of the C-3 phosphate and the C-6 proR hydrogen from 5-enolpyruvylshikimate-3-phosphate (EPSP) to yield chorismate, which is the branch point compound that serves as the starting substrate for the three terminal pathways of aromatic amino acid biosynthesis. This reaction introduces a second double bond into the aromatic ring system. In Maridesulfovibrio salexigens (strain ATCC 14822 / DSM 2638 / NCIMB 8403 / VKM B-1763) (Desulfovibrio salexigens), this protein is Chorismate synthase.